The following is a 61-amino-acid chain: Conotoxin Vn5.3 (61 aa).

The signal sequence occupies residues 1–19 (MHCLPVFVILLLLIASAPG). The propeptide occupies 20–50 (VDVQPKTKNFMTRASLRDFAKKTPKRLSKLR).

The protein belongs to the conotoxin T superfamily. In terms of processing, contains 2 disulfide bonds that can be either 'C1-C3, C2-C4' or 'C1-C4, C2-C3', since these disulfide connectivities have been observed for conotoxins with cysteine framework V (for examples, see AC P0DQQ7 and AC P81755). Expressed by the venom duct.

The protein localises to the secreted. The sequence is that of Conotoxin Vn5.3 from Conus ventricosus (Mediterranean cone).